Reading from the N-terminus, the 322-residue chain is TATA box-binding protein-associated factor RNA polymerase I subunit D (322 aa).

Disordered stretches follow at residues 1-70 (MAQS…SIEP) and 82-116 (FKKK…RITR). Ser23 carries the post-translational modification Phosphoserine. Positions 82 to 107 (FKKKKRKKRKKRKYEPKLRPRGRPRG) are enriched in basic residues. Ser137 is modified (phosphoserine). Positions 198–219 (YMDDDGSLSPIEEPLTEDEATN) are disordered. Ser232 carries the post-translational modification Phosphoserine. The segment covering 257 to 267 (FSKKAKDATHR) has biased composition (basic and acidic residues). A disordered region spans residues 257 to 276 (FSKKAKDATHREKGHRRTLK).

As to quaternary structure, component of the transcription factor SL1/TIF-IB complex, composed of TBP and at least TAF1A, TAF1B, TAF1C and TAF1D. Interacts with UBTF.

The protein localises to the nucleus. Component of the transcription factor SL1/TIF-IB complex, which is involved in the assembly of the PIC (preinitiation complex) during RNA polymerase I-dependent transcription. The rate of PIC formation probably is primarily dependent on the rate of association of SL1/TIF-IB with the rDNA promoter. SL1/TIF-IB is involved in stabilization of nucleolar transcription factor 1/UBTF on rDNA. Formation of SL1/TIF-IB excludes the association of TBP with TFIID subunits. In Mus musculus (Mouse), this protein is TATA box-binding protein-associated factor RNA polymerase I subunit D (Taf1d).